The chain runs to 410 residues: Protein translocase subunit SecY 2 (410 aa).

The next 10 helical transmembrane spans lie at 2 to 22 (ILII…SAAL), 45 to 65 (FSIM…VQLL), 94 to 114 (LTLV…NTLT), 125 to 145 (FTII…MWLG), 147 to 167 (LITE…GILV), 188 to 208 (WIRF…IVWF), 241 to 261 (VIPV…LMFF), 284 to 304 (GVII…IVQI), 339 to 359 (YLSL…LLVA), and 366 to 386 (LQIG…IEIG).

It belongs to the SecY/SEC61-alpha family. In terms of assembly, component of the Sec protein translocase complex. Heterotrimer consisting of SecY, SecE and SecG subunits. The heterotrimers can form oligomers, although 1 heterotrimer is thought to be able to translocate proteins. Interacts with the ribosome. Interacts with SecDF, and other proteins may be involved. Interacts with SecA.

It is found in the cell membrane. In terms of biological role, the central subunit of the protein translocation channel SecYEG. Consists of two halves formed by TMs 1-5 and 6-10. These two domains form a lateral gate at the front which open onto the bilayer between TMs 2 and 7, and are clamped together by SecE at the back. The channel is closed by both a pore ring composed of hydrophobic SecY resides and a short helix (helix 2A) on the extracellular side of the membrane which forms a plug. The plug probably moves laterally to allow the channel to open. The ring and the pore may move independently. In Lactobacillus kefiranofaciens subsp. kefiranofaciens, this protein is Protein translocase subunit SecY 2.